A 259-amino-acid chain; its full sequence is Thiazole synthase (259 aa).

The Schiff-base intermediate with DXP role is filled by Lys98. 1-deoxy-D-xylulose 5-phosphate is bound by residues Gly159, 185 to 186 (AG), and 207 to 208 (NS).

The protein belongs to the ThiG family. In terms of assembly, homotetramer. Forms heterodimers with either ThiH or ThiS.

Its subcellular location is the cytoplasm. The catalysed reaction is [ThiS sulfur-carrier protein]-C-terminal-Gly-aminoethanethioate + 2-iminoacetate + 1-deoxy-D-xylulose 5-phosphate = [ThiS sulfur-carrier protein]-C-terminal Gly-Gly + 2-[(2R,5Z)-2-carboxy-4-methylthiazol-5(2H)-ylidene]ethyl phosphate + 2 H2O + H(+). The protein operates within cofactor biosynthesis; thiamine diphosphate biosynthesis. In terms of biological role, catalyzes the rearrangement of 1-deoxy-D-xylulose 5-phosphate (DXP) to produce the thiazole phosphate moiety of thiamine. Sulfur is provided by the thiocarboxylate moiety of the carrier protein ThiS. In vitro, sulfur can be provided by H(2)S. This Chlorobium phaeovibrioides (strain DSM 265 / 1930) (Prosthecochloris vibrioformis (strain DSM 265)) protein is Thiazole synthase.